The sequence spans 370 residues: tRNA-specific 2-thiouridylase MnmA (370 aa).

ATP-binding positions include 11-18 (GMSGGVDS) and Met-37. The interaction with target base in tRNA stretch occupies residues 97–99 (NPD). Cys-102 (nucleophile) is an active-site residue. Residues Cys-102 and Cys-199 are joined by a disulfide bond. Gly-126 contributes to the ATP binding site. Residues 149–151 (KDQ) form an interaction with tRNA region. Cys-199 serves as the catalytic Cysteine persulfide intermediate. Residues 307–308 (RY) are interaction with tRNA.

The protein belongs to the MnmA/TRMU family.

Its subcellular location is the cytoplasm. The catalysed reaction is S-sulfanyl-L-cysteinyl-[protein] + uridine(34) in tRNA + AH2 + ATP = 2-thiouridine(34) in tRNA + L-cysteinyl-[protein] + A + AMP + diphosphate + H(+). In terms of biological role, catalyzes the 2-thiolation of uridine at the wobble position (U34) of tRNA, leading to the formation of s(2)U34. This chain is tRNA-specific 2-thiouridylase MnmA, found in Staphylococcus carnosus (strain TM300).